The primary structure comprises 283 residues: 4-diphosphocytidyl-2-C-methyl-D-erythritol kinase (283 aa).

Residue Lys13 is part of the active site. 96-106 (PMGGGIGGGSS) contacts ATP. The active site involves Asp138.

It belongs to the GHMP kinase family. IspE subfamily.

The catalysed reaction is 4-CDP-2-C-methyl-D-erythritol + ATP = 4-CDP-2-C-methyl-D-erythritol 2-phosphate + ADP + H(+). It functions in the pathway isoprenoid biosynthesis; isopentenyl diphosphate biosynthesis via DXP pathway; isopentenyl diphosphate from 1-deoxy-D-xylulose 5-phosphate: step 3/6. Catalyzes the phosphorylation of the position 2 hydroxy group of 4-diphosphocytidyl-2C-methyl-D-erythritol. In Pseudomonas fluorescens (strain Pf0-1), this protein is 4-diphosphocytidyl-2-C-methyl-D-erythritol kinase.